A 265-amino-acid chain; its full sequence is Capsule polysaccharide export inner-membrane protein BexB (265 aa).

Helical transmembrane passes span 37 to 57 (IGFL…VMMW), 64 to 84 (KFST…AMMW), 121 to 141 (VAGA…IGWI), 148 to 168 (FYML…GLII), 178 to 198 (FGKI…AFFF), and 235 to 255 (ESIG…LVMV). One can recognise an ABC transmembrane type-2 domain in the interval 37–258 (IGFLWLFVEP…LMGLVMVKNF (222 aa)).

Belongs to the ABC-2 integral membrane protein family.

The protein localises to the cell inner membrane. Its function is as follows. May form an ATP-driven capsule polysaccharide export apparatus, in association with the BexA, BexC and BexD proteins. This is Capsule polysaccharide export inner-membrane protein BexB (bexB) from Haemophilus influenzae.